We begin with the raw amino-acid sequence, 208 residues long: 2-phospho-L-lactate guanylyltransferase (208 aa).

The protein belongs to the CofC family. Homodimer.

It catalyses the reaction (2S)-2-phospholactate + GTP + H(+) = (2S)-lactyl-2-diphospho-5'-guanosine + diphosphate. It functions in the pathway cofactor biosynthesis; coenzyme F420 biosynthesis. Functionally, guanylyltransferase that catalyzes the activation of (2S)-2-phospholactate (2-PL) as (2S)-lactyl-2-diphospho-5'-guanosine, via the condensation of 2-PL with GTP. It is involved in the biosynthesis of coenzyme F420, a hydride carrier cofactor. In Methanosarcina barkeri (strain Fusaro / DSM 804), this protein is 2-phospho-L-lactate guanylyltransferase.